Here is a 1948-residue protein sequence, read N- to C-terminus: [F-actin]-monooxygenase MICAL2 (1948 aa).

The interval 2–494 (GENEDEKQAQ…KHLYITKEMD (493 aa)) is monooxygenase domain. FAD is bound by residues Cys97, 116 to 118 (EKR), 123 to 125 (RNN), Phe183, Tyr298, and Asp398. Positions 516 to 619 (DIRPNKLLTW…MVMYLSKFYE (104 aa)) constitute a Calponin-homology (CH) domain. Ser631 is subject to Phosphoserine. The Nuclear localization signal motif lies at 660–681 (RKRTPRVDAQTEENDVNKRRRQ). Disordered stretches follow at residues 664–709 (PRVD…ESGN), 753–776 (SRPP…PPLK), and 891–923 (KRVP…DSVS). A compositionally biased stretch (polar residues) spans 693–709 (SSRSLGSSQEYAKESGN). Pro residues predominate over residues 896 to 917 (AHPPSPPSCLPSPDPAAAPSPP). An LIM zinc-binding domain is found at 980-1042 (DTCYFCKKRV…KLHFAHCKTS (63 aa)). Positions 982, 985, 1003, 1006, 1009, 1012, 1032, and 1035 each coordinate Zn(2+). 3 disordered regions span residues 1045 to 1134 (QRKR…GQDG), 1146 to 1185 (SEDS…QPLT), and 1233 to 1298 (QSNS…DDVS). A compositionally biased stretch (basic and acidic residues) spans 1050-1059 (AELNQQREEE). Residues 1233-1243 (QSNSTPMNQRA) show a composition bias toward polar residues. A compositionally biased stretch (low complexity) spans 1254–1271 (SSSSSPSLPSSFSSASVP). The span at 1277 to 1292 (DSSSPQVTYNLHSPQI) shows a compositional bias: polar residues. The tract at residues 1300-1339 (TPIYLRRARAQGITKEIPLYLPHSPMLESTEHCLVSPDGE) is interaction with MAPK1. 4 disordered regions span residues 1478 to 1505 (QKKA…KSPL), 1519 to 1622 (SSEA…SSKV), 1672 to 1726 (GDFF…QAGK), and 1739 to 1767 (SGPG…QLSS). Positions 1522 to 1534 (AGKKTSSKPETKT) are enriched in basic and acidic residues. A compositionally biased stretch (low complexity) spans 1570–1579 (KASAFFSLAS). Positions 1580-1591 (PTSKAAQASDLS) are enriched in polar residues. Residues 1672-1682 (GDFFNSPKEKG) are compositionally biased toward basic and acidic residues. Position 1677 is a phosphoserine (Ser1677). Polar residues-rich tracts occupy residues 1698–1715 (VDST…TGQD) and 1747–1756 (EDTSSPTSSS). One can recognise a bMERB domain in the interval 1786–1936 (KQEELKRLHK…ERTQDQHFEN (151 aa)).

The protein belongs to the Mical family. In terms of assembly, interacts with PLXNA4. Interacts with RAB1B. Interacts with MAPK1/ERK2. Interacts with RAB35, RAB8A, RAB10, RAB13 and RAB15 (in their GTP-bound forms); binding to RAB35 is of low affinity compared to other Rab proteins; at least in case of RAB8A may bind 2 molecules of RAB8A simultaneously through a high and a low affinity binding site, respectively. May interact with MAPK1/ERK2. The cofactor is FAD.

Its subcellular location is the nucleus. It is found in the cytoplasm. The enzyme catalyses L-methionyl-[F-actin] + NADPH + O2 + H(+) = L-methionyl-(R)-S-oxide-[F-actin] + NADP(+) + H2O. Methionine monooxygenase that promotes depolymerization of F-actin by mediating oxidation of residues 'Met-44' and 'Met-47' on actin to form methionine-sulfoxide, resulting in actin filament disassembly and preventing repolymerization. Regulates the disassembly of branched actin networks also by oxidizing ARP3B-containing ARP2/3 complexes leading to ARP3B dissociation from the network. Acts as a key regulator of the SRF signaling pathway elicited by nerve growth factor and serum: mediates oxidation and subsequent depolymerization of nuclear actin, leading to increase MKL1/MRTF-A presence in the nucleus and promote SRF:MKL1/MRTF-A-dependent gene transcription. Does not activate SRF:MKL1/MRTF-A through RhoA. The sequence is that of [F-actin]-monooxygenase MICAL2 from Rattus norvegicus (Rat).